A 95-amino-acid polypeptide reads, in one-letter code: Blastocyst protein 4 (95 aa).

The signal sequence occupies residues 1–20 (MGAVFAIIGGFALDSPILRL).

The polypeptide is Blastocyst protein 4 (Oryctolagus cuniculus (Rabbit)).